Here is a 239-residue protein sequence, read N- to C-terminus: DNA oxidative demethylase ALKBH2 (239 aa).

A PCNA-binding motif is present at residues 3–7 (KFLVR). The disordered stretch occupies residues 11–32 (RDLQGGGEEPAPTGGASGDLKS). Substrate-binding positions include 80 to 82 (FGK) and 100 to 102 (YTF). The region spanning 130–235 (TFNFVLVNRY…RVNLTFRKIL (106 aa)) is the Fe2OG dioxygenase domain. 3 residues coordinate 2-oxoglutarate: asparagine 137, tyrosine 139, and histidine 149. Positions 149 and 151 each coordinate Fe cation. Aspartate 152 serves as a coordination point for substrate. The 2-oxoglutarate site is built by histidine 214, arginine 226, threonine 230, and arginine 232. Histidine 214 serves as a coordination point for Fe cation.

This sequence belongs to the alkB family. As to quaternary structure, interacts with PCNA homotrimer; this interaction is enhanced during the S-phase of the cell cycle. Interacts with nucleolar proteins NCL, UBTF and NPM1. Interacts with XRCC5-XRCC6 heterodimer. The cofactor is Fe(2+). In terms of tissue distribution, detected in liver, testis and kidney (at protein level). Detected in heart and testis.

The protein resides in the nucleus. The protein localises to the nucleolus. Its subcellular location is the nucleoplasm. It carries out the reaction a methylated nucleobase within DNA + 2-oxoglutarate + O2 = a nucleobase within DNA + formaldehyde + succinate + CO2. The catalysed reaction is an N(1)-methyl-2'-deoxyadenosine in double-stranded DNA + 2-oxoglutarate + O2 = a 2'-deoxyadenosine in double-stranded DNA + formaldehyde + succinate + CO2 + H(+). The enzyme catalyses an N(1)-methyl-2'-deoxyadenosine in single-stranded DNA + 2-oxoglutarate + O2 = a 2'-deoxyadenosine in single-stranded DNA + formaldehyde + succinate + CO2 + H(+). It catalyses the reaction an N(3)-methyl-2'-deoxycytidine in double-stranded DNA + 2-oxoglutarate + O2 = a 2'-deoxycytidine in double-stranded DNA + formaldehyde + succinate + CO2 + H(+). It carries out the reaction an N(3)-methyl-2'-deoxycytidine in single-stranded DNA + 2-oxoglutarate + O2 = a 2'-deoxycytidine in single-stranded DNA + formaldehyde + succinate + CO2 + H(+). The catalysed reaction is a 1,N(6)-etheno-2'-deoxyadenosine in double-stranded DNA + 2-oxoglutarate + O2 + H2O = a 2'-deoxyadenosine in double-stranded DNA + glyoxal + succinate + CO2. The enzyme catalyses a 1,N(6)-etheno-2'-deoxyadenosine in single-stranded DNA + 2-oxoglutarate + O2 + H2O = a 2'-deoxyadenosine in single-stranded DNA + glyoxal + succinate + CO2. It catalyses the reaction a 3,N(4)-etheno-2'-deoxycytidine in double-stranded DNA + 2-oxoglutarate + O2 + H2O = a 2'-deoxycytidine in double-stranded DNA + glyoxal + succinate + CO2. It carries out the reaction a 3,N(4)-etheno-2'-deoxycytidine in single-stranded DNA + 2-oxoglutarate + O2 + H2O = a 2'-deoxycytidine in single-stranded DNA + glyoxal + succinate + CO2. The catalysed reaction is a 1,N(2)-etheno-2'-deoxyguanosine in double-stranded DNA + 2-oxoglutarate + O2 + H2O = a 2'-deoxyguanosine in double-stranded DNA + glyoxal + succinate + CO2. Its activity is regulated as follows. Activated by magnesium ions. Dioxygenase that repairs alkylated nucleic acid bases by direct reversal oxidative dealkylation. Can process both double-stranded (ds) and single-stranded (ss) DNA substrates, with a strong preference for dsDNA. Uses molecular oxygen, 2-oxoglutarate and iron as cofactors to oxidize the alkyl groups that are subsequently released as aldehydes, regenerating the undamaged bases. Probes the base pair stability, locates a weakened base pair and flips the damaged base to accommodate the lesion in its active site for efficient catalysis. Repairs monoalkylated bases, specifically N1-methyladenine and N3-methylcytosine, as well as higher order alkyl adducts such as bases modified with exocyclic bridged adducts known as etheno adducts including 1,N6-ethenoadenine, 3,N4-ethenocytosine and 1,N2-ethenoguanine. Acts as a gatekeeper of genomic integrity under alkylation stress. Efficiently repairs alkylated lesions in ribosomal DNA (rDNA). These lesions can cause ss- and dsDNA strand breaks that severely impair rDNA transcription. In a response mechanism to DNA damage, associates with PCNA at replication forks to repair alkylated adducts prior to replication. This chain is DNA oxidative demethylase ALKBH2 (Alkbh2), found in Mus musculus (Mouse).